A 124-amino-acid polypeptide reads, in one-letter code: Histone H2B 1/2 (124 aa).

Residues 1–32 (MPEPAKAAPKKGSKKAVTKTAGKGGKKRKRTR) form a disordered region. Lys6 and Lys11 each carry N6-acetyllysine. Residues 8-17 (APKKGSKKAV) are compositionally biased toward basic residues. At Ser13 the chain carries Phosphoserine. Residues Lys14 and Lys19 each carry the N6-acetyllysine modification. O-linked (GlcNAc) serine glycosylation occurs at Ser111. Residue Lys119 forms a Glycyl lysine isopeptide (Lys-Gly) (interchain with G-Cter in ubiquitin) linkage.

It belongs to the histone H2B family. In terms of assembly, the nucleosome is a histone octamer containing two molecules each of H2A, H2B, H3 and H4 assembled in one H3-H4 heterotetramer and two H2A-H2B heterodimers. The octamer wraps approximately 147 bp of DNA. Monoubiquitination of Lys-119 by the BRE1 gives a specific tag for epigenetic transcriptional activation and is also prerequisite for histone H3 'Lys-4' and 'Lys-79' methylation. In terms of processing, phosphorylated during apoptosis; which facilitates apoptotic chromatin condensation. Post-translationally, glcNAcylation at Ser-111 promotes monoubiquitination of Lys-119. It fluctuates in response to extracellular glucose, and associates with transcribed genes.

The protein resides in the nucleus. Its subcellular location is the chromosome. Core component of nucleosome. Nucleosomes wrap and compact DNA into chromatin, limiting DNA accessibility to the cellular machineries which require DNA as a template. Histones thereby play a central role in transcription regulation, DNA repair, DNA replication and chromosomal stability. DNA accessibility is regulated via a complex set of post-translational modifications of histones, also called histone code, and nucleosome remodeling. This chain is Histone H2B 1/2, found in Danio rerio (Zebrafish).